A 171-amino-acid polypeptide reads, in one-letter code: MRTPLLLQSLKTRVAALHTLIGPLASQRHFSPRFDRQLFACRGARLGDYLTEAEESLTHLEAAVNQGDATRVAWLAERLAAQIEALQREAATATLRRHENAHLPGGRLHARLAEYQEYERRLLAMKNEREQRYAERHDPQLAREITALDERLTRCRTAIARTERALERITR.

Belongs to the PriC family. Monomer. Component of the replication restart primosome, which is composed of PriA, PriB, PriC, DnaBe and DnaT; DnaG primase associates transiently with this complex. Interacts with the C-terminus of SSB. SSB interaction is required to load the main replicative helicase onto substrate replication forks. Interacts with helicase DnaB alone and in the DnaB-DnaC complex, probably 1:1 binding with DnaB.

Functionally, involved in the restart of stalled replication forks, which reloads the DnaB replicative helicase on sites other than the origin of replication. In vitro can load (E.coli) DnaB replicative helicase from a DnaB-DnaC complex on a single-stranded DNA (ssDNA)-binding protein (SSB)-coated stalled replication fork with no leading- or lagging-strand in the absence of other primosome proteins (PriA, PriB or DnaT). Binds SSB (tested with E.coli protein) and ssDNA. Complements priC in an E.coli priB-priC double deletion. The protein is Replication restart protein PriC of Cronobacter sakazakii (strain ATCC BAA-894) (Enterobacter sakazakii).